The chain runs to 119 residues: Insulin growth factor-like family member 2 (119 aa).

An N-terminal signal peptide occupies residues 1–25; it reads MVPRIFAPAYVSVCLLLLCPREVIA.

Belongs to the IGFL family. Detected in cerebellum, heart, placenta, spleen, stomach, testis and thymus.

It localises to the secreted. Functionally, potential ligand of the IGFLR1 cell membrane receptor. This is Insulin growth factor-like family member 2 (IGFL2) from Homo sapiens (Human).